Here is a 208-residue protein sequence, read N- to C-terminus: Large ribosomal subunit protein uL4 (208 aa).

The segment at 45 to 84 (RQGTHKVKNRSEVRGGGKKPYRQKGTGHARQGSSRSGLMS) is disordered. Residues 60-71 (GGKKPYRQKGTG) show a composition bias toward basic residues.

This sequence belongs to the universal ribosomal protein uL4 family. As to quaternary structure, part of the 50S ribosomal subunit.

Its function is as follows. One of the primary rRNA binding proteins, this protein initially binds near the 5'-end of the 23S rRNA. It is important during the early stages of 50S assembly. It makes multiple contacts with different domains of the 23S rRNA in the assembled 50S subunit and ribosome. Functionally, forms part of the polypeptide exit tunnel. This chain is Large ribosomal subunit protein uL4, found in Prosthecochloris aestuarii (strain DSM 271 / SK 413).